The following is a 51-amino-acid chain: Large ribosomal subunit protein bL33 (51 aa).

The interval M1–R24 is disordered.

The protein belongs to the bacterial ribosomal protein bL33 family.

This Cellvibrio japonicus (strain Ueda107) (Pseudomonas fluorescens subsp. cellulosa) protein is Large ribosomal subunit protein bL33.